We begin with the raw amino-acid sequence, 468 residues long: ATP synthase subunit beta (468 aa).

155 to 162 (GGAGVGKT) is an ATP binding site.

This sequence belongs to the ATPase alpha/beta chains family. As to quaternary structure, F-type ATPases have 2 components, CF(1) - the catalytic core - and CF(0) - the membrane proton channel. CF(1) has five subunits: alpha(3), beta(3), gamma(1), delta(1), epsilon(1). CF(0) has three main subunits: a(1), b(2) and c(9-12). The alpha and beta chains form an alternating ring which encloses part of the gamma chain. CF(1) is attached to CF(0) by a central stalk formed by the gamma and epsilon chains, while a peripheral stalk is formed by the delta and b chains.

Its subcellular location is the cell membrane. It carries out the reaction ATP + H2O + 4 H(+)(in) = ADP + phosphate + 5 H(+)(out). In terms of biological role, produces ATP from ADP in the presence of a proton gradient across the membrane. The catalytic sites are hosted primarily by the beta subunits. The sequence is that of ATP synthase subunit beta from Streptococcus mutans serotype c (strain ATCC 700610 / UA159).